The sequence spans 249 residues: Flagellar basal-body rod protein FlgF (249 aa).

It belongs to the flagella basal body rod proteins family. The basal body constitutes a major portion of the flagellar organelle and consists of five rings (E,L,P,S, and M) mounted on a central rod. The rod consists of about 26 subunits of FlgG in the distal portion, and FlgB, FlgC and FlgF are thought to build up the proximal portion of the rod with about 6 subunits each.

The protein localises to the bacterial flagellum basal body. In Buchnera aphidicola subsp. Schizaphis graminum (strain Sg), this protein is Flagellar basal-body rod protein FlgF (flgF).